Reading from the N-terminus, the 259-residue chain is Protein-L-isoaspartate O-methyltransferase (259 aa).

The tract at residues 1–25 (MRKRVDPPAGGRLAPGITPANSNTR) is disordered. Ser-107 is a catalytic residue.

It belongs to the methyltransferase superfamily. L-isoaspartyl/D-aspartyl protein methyltransferase family.

It is found in the cytoplasm. The catalysed reaction is [protein]-L-isoaspartate + S-adenosyl-L-methionine = [protein]-L-isoaspartate alpha-methyl ester + S-adenosyl-L-homocysteine. In terms of biological role, catalyzes the methyl esterification of L-isoaspartyl residues in peptides and proteins that result from spontaneous decomposition of normal L-aspartyl and L-asparaginyl residues. It plays a role in the repair and/or degradation of damaged proteins. The protein is Protein-L-isoaspartate O-methyltransferase of Bordetella bronchiseptica (strain ATCC BAA-588 / NCTC 13252 / RB50) (Alcaligenes bronchisepticus).